The sequence spans 289 residues: Phosphatidylglycerol--prolipoprotein diacylglyceryl transferase (289 aa).

The next 7 membrane-spanning stretches (helical) occupy residues 23–43 (ALHW…WLAV), 61–81 (LLYM…VLFY), 99–119 (GGMS…WFAH), 125–145 (FFQV…AGRL), 199–219 (SQLY…NLFI), 226–246 (GSVS…TEFF), and 259–279 (LFSM…LMMV). Arginine 144 serves as a coordination point for a 1,2-diacyl-sn-glycero-3-phospho-(1'-sn-glycerol).

This sequence belongs to the Lgt family.

Its subcellular location is the cell inner membrane. It catalyses the reaction L-cysteinyl-[prolipoprotein] + a 1,2-diacyl-sn-glycero-3-phospho-(1'-sn-glycerol) = an S-1,2-diacyl-sn-glyceryl-L-cysteinyl-[prolipoprotein] + sn-glycerol 1-phosphate + H(+). Its pathway is protein modification; lipoprotein biosynthesis (diacylglyceryl transfer). Catalyzes the transfer of the diacylglyceryl group from phosphatidylglycerol to the sulfhydryl group of the N-terminal cysteine of a prolipoprotein, the first step in the formation of mature lipoproteins. This chain is Phosphatidylglycerol--prolipoprotein diacylglyceryl transferase, found in Pectobacterium atrosepticum (strain SCRI 1043 / ATCC BAA-672) (Erwinia carotovora subsp. atroseptica).